Consider the following 368-residue polypeptide: N-acetylneuraminate epimerase (368 aa).

The N-terminal stretch at 1–19 is a signal peptide; it reads MNKTIMALAIMMASFAANA. Kelch repeat units follow at residues 40 to 84, 86 to 137, 139 to 173, 174 to 219, 222 to 265, 287 to 336, and 338 to 367; these read TVYI…AFID, NLYV…FVHN, KAYVTGGVNQNIFNGYFEDLNEAGKDSTAIDKINA, HYFD…VNKG, TWLI…VAGG, ENYQ…PWNN, and LLIIGGETAGGKAVTDSVLISVKDNKVTVQ. Catalysis depends on Glu-228, which acts as the Proton acceptor.

The protein belongs to the NanM family. In terms of assembly, homodimer.

Its subcellular location is the periplasm. It catalyses the reaction N-acetyl-alpha-neuraminate = N-acetyl-beta-neuraminate. In terms of biological role, converts alpha-N-acetylneuranimic acid (Neu5Ac) to the beta-anomer, accelerating the equilibrium between the alpha- and beta-anomers. Probably facilitates sialidase-negative bacteria to compete successfully for limited amounts of extracellular Neu5Ac, which is likely taken up in the beta-anomer. In addition, the rapid removal of sialic acid from solution might be advantageous to the bacterium to damp down host responses. This is N-acetylneuraminate epimerase from Shigella sonnei (strain Ss046).